The chain runs to 197 residues: Recombination protein RecR (197 aa).

The C4-type zinc finger occupies 57 to 72; that stretch reads CSVCFGITEDDPCRFC. Residues 79 to 174 form the Toprim domain; it reads GAICVVEEPQ…RVTRLAHGIP (96 aa).

This sequence belongs to the RecR family.

In terms of biological role, may play a role in DNA repair. It seems to be involved in an RecBC-independent recombinational process of DNA repair. It may act with RecF and RecO. The polypeptide is Recombination protein RecR (Geobacter sulfurreducens (strain ATCC 51573 / DSM 12127 / PCA)).